The sequence spans 417 residues: Gamma-glutamyl phosphate reductase (417 aa).

The protein belongs to the gamma-glutamyl phosphate reductase family.

It is found in the cytoplasm. The catalysed reaction is L-glutamate 5-semialdehyde + phosphate + NADP(+) = L-glutamyl 5-phosphate + NADPH + H(+). Its pathway is amino-acid biosynthesis; L-proline biosynthesis; L-glutamate 5-semialdehyde from L-glutamate: step 2/2. Catalyzes the NADPH-dependent reduction of L-glutamate 5-phosphate into L-glutamate 5-semialdehyde and phosphate. The product spontaneously undergoes cyclization to form 1-pyrroline-5-carboxylate. This is Gamma-glutamyl phosphate reductase from Enterococcus faecalis (strain ATCC 700802 / V583).